A 203-amino-acid chain; its full sequence is CASP-like protein 4B2 (203 aa).

Residues 1–57 (MAMVTADASAAADAATKQPDVEKDYSSYNGASTAGAGGGGVVESVVARWRREDMLDK) are Cytoplasmic-facing. A helical membrane pass occupies residues 58–78 (CPLALHAAAAAFAFVALVLVA). The Extracellular portion of the chain corresponds to 79-92 (SNQHGDWMQFDRYQ). The helical transmembrane segment at 93 to 113 (EYMYLLAIAALAFAYSLAQAL) threads the bilayer. At 114 to 135 (RHAHRMRGGADPIPAPSARLFD) the chain is on the cytoplasmic side. A helical transmembrane segment spans residues 136–156 (FIADQVVAYLLMSALSAAIPI). Residues 157-171 (TNRMRTAVINNFTDA) are Extracellular-facing. N-linked (GlcNAc...) asparagine glycosylation is present at N167. A helical transmembrane segment spans residues 172 to 192 (TAAAISMAFLAFVALALSATV). Over 193–203 (SGYKLSRQMYM) the chain is Cytoplasmic.

Belongs to the Casparian strip membrane proteins (CASP) family. In terms of assembly, homodimer and heterodimers.

It is found in the cell membrane. The chain is CASP-like protein 4B2 from Hordeum vulgare subsp. vulgare (Domesticated barley).